The primary structure comprises 397 residues: Exodeoxyribonuclease 7 large subunit (397 aa).

It belongs to the XseA family. In terms of assembly, heterooligomer composed of large and small subunits.

The protein resides in the cytoplasm. The enzyme catalyses Exonucleolytic cleavage in either 5'- to 3'- or 3'- to 5'-direction to yield nucleoside 5'-phosphates.. Bidirectionally degrades single-stranded DNA into large acid-insoluble oligonucleotides, which are then degraded further into small acid-soluble oligonucleotides. The sequence is that of Exodeoxyribonuclease 7 large subunit from Anaplasma marginale (strain Florida).